The primary structure comprises 102 residues: Large ribosomal subunit protein bL21 (102 aa).

The protein belongs to the bacterial ribosomal protein bL21 family. As to quaternary structure, part of the 50S ribosomal subunit. Contacts protein L20.

Its function is as follows. This protein binds to 23S rRNA in the presence of protein L20. In Sulfurimonas denitrificans (strain ATCC 33889 / DSM 1251) (Thiomicrospira denitrificans (strain ATCC 33889 / DSM 1251)), this protein is Large ribosomal subunit protein bL21.